We begin with the raw amino-acid sequence, 283 residues long: ATP phosphoribosyltransferase (283 aa).

This sequence belongs to the ATP phosphoribosyltransferase family. Long subfamily. Mg(2+) is required as a cofactor.

It is found in the cytoplasm. It catalyses the reaction 1-(5-phospho-beta-D-ribosyl)-ATP + diphosphate = 5-phospho-alpha-D-ribose 1-diphosphate + ATP. The protein operates within amino-acid biosynthesis; L-histidine biosynthesis; L-histidine from 5-phospho-alpha-D-ribose 1-diphosphate: step 1/9. Its activity is regulated as follows. Feedback inhibited by histidine. Functionally, catalyzes the condensation of ATP and 5-phosphoribose 1-diphosphate to form N'-(5'-phosphoribosyl)-ATP (PR-ATP). Has a crucial role in the pathway because the rate of histidine biosynthesis seems to be controlled primarily by regulation of HisG enzymatic activity. The polypeptide is ATP phosphoribosyltransferase (Rhodococcus erythropolis (strain PR4 / NBRC 100887)).